The primary structure comprises 692 residues: Elongation factor G (692 aa).

In terms of domain architecture, tr-type G spans 9 to 284 (HMVRNIGIAA…AVVDYLPAPD (276 aa)). GTP contacts are provided by residues 18 to 25 (AHIDAGKT), 82 to 86 (DTPGH), and 136 to 139 (NKMD).

The protein belongs to the TRAFAC class translation factor GTPase superfamily. Classic translation factor GTPase family. EF-G/EF-2 subfamily.

It is found in the cytoplasm. Its function is as follows. Catalyzes the GTP-dependent ribosomal translocation step during translation elongation. During this step, the ribosome changes from the pre-translocational (PRE) to the post-translocational (POST) state as the newly formed A-site-bound peptidyl-tRNA and P-site-bound deacylated tRNA move to the P and E sites, respectively. Catalyzes the coordinated movement of the two tRNA molecules, the mRNA and conformational changes in the ribosome. This is Elongation factor G from Campylobacter curvus (strain 525.92).